Reading from the N-terminus, the 141-residue chain is ATP synthase epsilon chain (141 aa).

This sequence belongs to the ATPase epsilon chain family. F-type ATPases have 2 components, CF(1) - the catalytic core - and CF(0) - the membrane proton channel. CF(1) has five subunits: alpha(3), beta(3), gamma(1), delta(1), epsilon(1). CF(0) has three main subunits: a, b and c.

The protein localises to the cell inner membrane. Functionally, produces ATP from ADP in the presence of a proton gradient across the membrane. The protein is ATP synthase epsilon chain of Burkholderia mallei (strain NCTC 10247).